The chain runs to 359 residues: Alanine racemase (359 aa).

The active-site Proton acceptor; specific for D-alanine is Lys34. Lys34 bears the N6-(pyridoxal phosphate)lysine mark. Arg129 contributes to the substrate binding site. Tyr256 (proton acceptor; specific for L-alanine) is an active-site residue. Met304 is a binding site for substrate.

It belongs to the alanine racemase family. Pyridoxal 5'-phosphate serves as cofactor.

The catalysed reaction is L-alanine = D-alanine. The protein operates within amino-acid biosynthesis; D-alanine biosynthesis; D-alanine from L-alanine: step 1/1. In terms of biological role, catalyzes the interconversion of L-alanine and D-alanine. May also act on other amino acids. In Photobacterium profundum (strain SS9), this protein is Alanine racemase (alr).